The chain runs to 409 residues: Ligand-gated cation channel ZACN (409 aa).

Positions 1 to 18 are cleaved as a signal peptide; that stretch reads MAPRLLLLLLAFLRLGTT. Residues 19-233 lie on the Extracellular side of the membrane; sequence GPLVQGRGFR…LRLQNTALKA (215 aa). Asn-55 and Asn-99 each carry an N-linked (GlcNAc...) asparagine glycan. A disulfide bridge links Cys-157 with Cys-171. A helical transmembrane segment spans residues 234 to 254; the sequence is IIALLVPGEALLLADMCGGLL. The Cytoplasmic segment spans residues 255 to 265; the sequence is PLRATERIAYK. Residues 266–286 traverse the membrane as a helical segment; the sequence is VTLLLGYLVFHSSLVQALPSS. At 287-296 the chain is on the extracellular side; sequence SSCNPLLIYY. Residues 297–317 traverse the membrane as a helical segment; it reads FTVLLLLLFISTMETVLLAAL. Topologically, residues 318 to 365 are cytoplasmic; that stretch reads QARGHLSARSSPIPTPRGEQQDHGDLGPHPEEAPGVKESRSWAEAADH. Residues 325–354 are disordered; sequence ARSSPIPTPRGEQQDHGDLGPHPEEAPGVK. The segment covering 336 to 354 has biased composition (basic and acidic residues); sequence EQQDHGDLGPHPEEAPGVK. The chain crosses the membrane as a helical span at residues 366–386; that stretch reads IFFLVYVVGVVCSQFFFIGFW. Topologically, residues 387–409 are extracellular; sequence MWATCKSDPAPGEAIPHGGQPRL.

Belongs to the ligand-gated ion channel (TC 1.A.9) family. Glycosylated.

The protein localises to the cell membrane. It catalyses the reaction Na(+)(in) = Na(+)(out). The catalysed reaction is K(+)(in) = K(+)(out). Its function is as follows. Ligand-gated cation channel that allows the movement of sodium and potassium monoatomic cations across cell membranes when activated by zinc (Zn2+), copper (Cu2+), and changes in pH. Could also transport cesium. In Canis lupus familiaris (Dog), this protein is Ligand-gated cation channel ZACN.